Consider the following 1379-residue polypeptide: Increased rDNA silencing protein 4 homolog (1379 aa).

8 disordered regions span residues 1–25 (MDAIHPVSLRNSKRHPLLHSERNLS), 138–159 (TSTRKRSLTVPTPRTSFPHHPR), 240–314 (EFDF…PLPS), 337–370 (SQPFKSAEPLSSAIPLPNPMSEKMRNGASKQAIM), 534–573 (ASKRAALSQQTESASKSSSNISEMCDSHPPSNFSISASQQ), 768–816 (TDLH…NDIG), 1047–1110 (DAPS…KDSQ), and 1168–1208 (AVHE…DGKY). Over residues 250–259 (PSDKNLEKLK) the composition is skewed to basic and acidic residues. Positions 262 to 287 (ASKQASESQSLKNMESLSLARSSPIL) are enriched in polar residues. Residues 541–555 (SQQTESASKSSSNIS) show a composition bias toward low complexity. Residues 562-573 (PPSNFSISASQQ) show a composition bias toward polar residues. Positions 770–780 (LHRKPRRKHKS) are enriched in basic residues. Acidic residues predominate over residues 793–802 (DESPQSDEVE). The region spanning 1240 to 1329 (AANKGYLLSK…DSVWLSSKRM (90 aa)) is the EH domain. The EF-hand domain occupies 1273–1308 (APTSVLAKIYDLVDRHHTGVLGRDEFIVGMFLIDQY).

Belongs to the IRS4 family.

Positive regulator of phosphatidylinositol 4,5-bisphosphate turnover and negatively regulates signaling through the cell integrity pathway. Involved in rDNA silencing. The chain is Increased rDNA silencing protein 4 homolog from Schizosaccharomyces pombe (strain 972 / ATCC 24843) (Fission yeast).